The sequence spans 256 residues: Trans-aconitate 2-methyltransferase (256 aa).

It belongs to the methyltransferase superfamily. Tam family.

It localises to the cytoplasm. It catalyses the reaction trans-aconitate + S-adenosyl-L-methionine = (E)-3-(methoxycarbonyl)pent-2-enedioate + S-adenosyl-L-homocysteine. Its function is as follows. Catalyzes the S-adenosylmethionine monomethyl esterification of trans-aconitate. This Rhodopseudomonas palustris (strain HaA2) protein is Trans-aconitate 2-methyltransferase.